The sequence spans 194 residues: ATP-dependent Clp protease proteolytic subunit (194 aa).

S98 (nucleophile) is an active-site residue. The active site involves H123.

This sequence belongs to the peptidase S14 family. In terms of assembly, fourteen ClpP subunits assemble into 2 heptameric rings which stack back to back to give a disk-like structure with a central cavity, resembling the structure of eukaryotic proteasomes.

Its subcellular location is the cytoplasm. It carries out the reaction Hydrolysis of proteins to small peptides in the presence of ATP and magnesium. alpha-casein is the usual test substrate. In the absence of ATP, only oligopeptides shorter than five residues are hydrolyzed (such as succinyl-Leu-Tyr-|-NHMec, and Leu-Tyr-Leu-|-Tyr-Trp, in which cleavage of the -Tyr-|-Leu- and -Tyr-|-Trp bonds also occurs).. In terms of biological role, cleaves peptides in various proteins in a process that requires ATP hydrolysis. Has a chymotrypsin-like activity. Plays a major role in the degradation of misfolded proteins. The polypeptide is ATP-dependent Clp protease proteolytic subunit (Staphylococcus epidermidis (strain ATCC 35984 / DSM 28319 / BCRC 17069 / CCUG 31568 / BM 3577 / RP62A)).